The primary structure comprises 328 residues: MNNSAFTFQTLHPDTIMDALFEHGIRVDSGLTPLNSYENRVYQFQDEDRRRFVVKFYRPERWTADQILEEHQFALQLVNDEVPVAAPVAFNGQTLLNHQGFYFAVFPSVGGRQFEADNIDQMEAVGRYLGRMHQTGRKQLFIHRPTIGLNEYLIEPRKLFEDATLIPSGLKAAFLKATDELIAAVTAHWREDFTVLRLHGDCHAGNILWRDGPMFVDLDDARNGPAVQDLWMLLNGDKAEQRMQLETIIEAYEEFSEFDTAEIGLIEPLRAMRLVYYLAWLMRRWADPAFPKNFPWLTGEDYWLRQTATFIEQAKVLQEPPLQLTPMY.

The Proton acceptor role is filled by Asp201. The Mg(2+) site is built by Asn206 and Asp217. Asp217 is a catalytic residue.

Belongs to the SrkA/RdoA protein kinase family. In terms of assembly, monomer. Mg(2+) serves as cofactor.

The protein localises to the cytoplasm. It carries out the reaction L-seryl-[protein] + ATP = O-phospho-L-seryl-[protein] + ADP + H(+). It catalyses the reaction L-threonyl-[protein] + ATP = O-phospho-L-threonyl-[protein] + ADP + H(+). Functionally, a protein kinase that phosphorylates Ser and Thr residues. Probably acts to suppress the effects of stress linked to accumulation of reactive oxygen species. Probably involved in the extracytoplasmic stress response. The sequence is that of Stress response kinase A from Escherichia coli O6:H1 (strain CFT073 / ATCC 700928 / UPEC).